The primary structure comprises 384 residues: Chorismate synthase (384 aa).

R40 and R46 together coordinate NADP(+). Residues 128–130 (RAS), G292, 307–311 (KPIPT), and R333 contribute to the FMN site.

Belongs to the chorismate synthase family. In terms of assembly, homotetramer. FMNH2 serves as cofactor.

It catalyses the reaction 5-O-(1-carboxyvinyl)-3-phosphoshikimate = chorismate + phosphate. It functions in the pathway metabolic intermediate biosynthesis; chorismate biosynthesis; chorismate from D-erythrose 4-phosphate and phosphoenolpyruvate: step 7/7. Functionally, catalyzes the anti-1,4-elimination of the C-3 phosphate and the C-6 proR hydrogen from 5-enolpyruvylshikimate-3-phosphate (EPSP) to yield chorismate, which is the branch point compound that serves as the starting substrate for the three terminal pathways of aromatic amino acid biosynthesis. This reaction introduces a second double bond into the aromatic ring system. The polypeptide is Chorismate synthase (Carboxydothermus hydrogenoformans (strain ATCC BAA-161 / DSM 6008 / Z-2901)).